Consider the following 302-residue polypeptide: MPAITASMVAELRAKTDAPMMECKKALTEAEGDLNKAEELLRVKLGSKASKAASRVTAEGIVVAHISGTTGALMELNCETDFVSKNDDFLAFGKTLAELVATKAPVDVAALSALEIAGVTVEATRTALIGKIGENIAIRRFKRFSGDSKLVSYLHGTRIGVVVEYTGDDVAAKDVAMHVAAMKPVALTSADVPADLIEKERNVAAGKAAEDAKAAEAAGKAPQSAEIVTKRVEGSVQKFLKEVSLFNQTFVKNDKQTVEQMLKAASTTIKGFTMYIVGEGIEKKTDDFAAEVAAQVAAAKGQ.

The involved in Mg(2+) ion dislocation from EF-Tu stretch occupies residues 80–83; sequence TDFV.

It belongs to the EF-Ts family.

The protein resides in the cytoplasm. Functionally, associates with the EF-Tu.GDP complex and induces the exchange of GDP to GTP. It remains bound to the aminoacyl-tRNA.EF-Tu.GTP complex up to the GTP hydrolysis stage on the ribosome. The protein is Elongation factor Ts of Methylibium petroleiphilum (strain ATCC BAA-1232 / LMG 22953 / PM1).